Here is a 940-residue protein sequence, read N- to C-terminus: Leucine--tRNA ligase, mitochondrial (940 aa).

Positions 54-64 (PYPSGALHMGH) match the 'HIGH' region motif. Residues 638–642 (TINKL) carry the 'KMSKS' region motif. Residue Lys-641 participates in ATP binding. The tract at residues 724-744 (KEQHQHQQQQHQQPLPSSEFN) is disordered.

It belongs to the class-I aminoacyl-tRNA synthetase family.

It localises to the mitochondrion. The enzyme catalyses tRNA(Leu) + L-leucine + ATP = L-leucyl-tRNA(Leu) + AMP + diphosphate. This is Leucine--tRNA ligase, mitochondrial (mleuS) from Dictyostelium discoideum (Social amoeba).